The primary structure comprises 218 residues: Runt-related transcription factor 2 (218 aa).

The Runt domain occupies 67–195 (RGHKFYLEKK…TVDGPREPRR (129 aa)). The required for interaction with FOXO1 stretch occupies residues 122 to 138 (VMAGNDENYSAELRNAS). The interval 189–218 (GPREPRRHRQKLDDSKPSLFSDRLSDLGRI) is disordered. Residue Lys-204 forms a Glycyl lysine isopeptide (Lys-Gly) (interchain with G-Cter in SUMO2) linkage.

As to quaternary structure, heterodimer of an alpha and a beta subunit. The alpha subunit binds DNA as a monomer and through the Runt domain. DNA-binding is increased by heterodimerization. Interacts with XRCC6 (Ku70) and XRCC5 (Ku80). Interacts with CCNB1, KAT6A and KAT6B. Interacts with HIVEP3. Interacts with IFI204. Interaction with SATB2; the interaction results in enhanced DNA binding and transactivation by these transcription factors. Binds to HIPK3. Interacts with FOXO1 (via a C-terminal region); the interaction inhibits RUNX2 transcriptional activity towards BGLAP. Interacts with FOXP3. Interacts with TMEM119. Interacts with OLFM2. Interacts with IPO7; the interaction inhibits RUNX2 nuclear translocation in osteoblasts. Post-translationally, phosphorylated; probably by MAP kinases (MAPK). Phosphorylation by HIPK3 is required for the SPEN/MINT and FGF2 transactivation during osteoblastic differentiation.

The protein resides in the nucleus. It is found in the cytoplasm. Functionally, transcription factor involved in osteoblastic differentiation and skeletal morphogenesis. Essential for the maturation of osteoblasts and both intramembranous and endochondral ossification. CBF binds to the core site, 5'-PYGPYGGT-3', of a number of enhancers and promoters, including murine leukemia virus, polyomavirus enhancer, T-cell receptor enhancers, osteocalcin, osteopontin, bone sialoprotein, alpha 1(I) collagen, LCK, IL-3 and GM-CSF promoters. Inhibits KAT6B-dependent transcriptional activation. In osteoblasts, supports transcription activation: synergizes with SPEN/MINT to enhance FGFR2-mediated activation of the osteocalcin FGF-responsive element (OCFRE). This is Runt-related transcription factor 2 (Runx2) from Rattus norvegicus (Rat).